A 193-amino-acid polypeptide reads, in one-letter code: Peptidyl-tRNA hydrolase (193 aa).

Tyr15 lines the tRNA pocket. The active-site Proton acceptor is the His20. Residues Phe65, Asn67, and Asn113 each coordinate tRNA.

This sequence belongs to the PTH family. In terms of assembly, monomer.

The protein resides in the cytoplasm. The catalysed reaction is an N-acyl-L-alpha-aminoacyl-tRNA + H2O = an N-acyl-L-amino acid + a tRNA + H(+). In terms of biological role, hydrolyzes ribosome-free peptidyl-tRNAs (with 1 or more amino acids incorporated), which drop off the ribosome during protein synthesis, or as a result of ribosome stalling. Catalyzes the release of premature peptidyl moieties from peptidyl-tRNA molecules trapped in stalled 50S ribosomal subunits, and thus maintains levels of free tRNAs and 50S ribosomes. The polypeptide is Peptidyl-tRNA hydrolase (Ehrlichia ruminantium (strain Gardel)).